Reading from the N-terminus, the 499-residue chain is Probable folate-biopterin transporter 2 (499 aa).

12 helical membrane passes run 43–63 (WSFV…GGSL), 92–112 (IPWI…IFGF), 116–136 (PYFI…SLHS), 141–161 (YLAL…DVTI), 185–205 (LSSS…VHLV), 209–229 (GVFG…IVFS), 266–286 (LYMY…FYWF), 302–322 (FILS…QLVL), 330–350 (LCLW…ILVF), 354–374 (LKFG…SQMI), 399–419 (FALL…LGGI), and 435–455 (WLAV…LFLV).

This sequence belongs to the major facilitator superfamily. Folate-biopterin transporter (TC 2.A.71) family.

It is found in the membrane. Functionally, could mediate folate transport. The protein is Probable folate-biopterin transporter 2 of Arabidopsis thaliana (Mouse-ear cress).